The primary structure comprises 456 residues: Serine--tRNA ligase (456 aa).

Disordered regions lie at residues 107 to 130 (PHSS…GTPP) and 229 to 253 (FLEN…QDDD). Residues 114–125 (GRSESDNREVRR) show a composition bias toward basic and acidic residues. The span at 239-248 (LPSNSNSPQG) shows a compositional bias: polar residues. 260 to 262 (TSE) contributes to the L-serine binding site. ATP is bound at residue 291–293 (RSE). L-serine is bound at residue E314. 378–381 (EISS) contacts ATP. Residue S413 participates in L-serine binding.

It belongs to the class-II aminoacyl-tRNA synthetase family. Type-1 seryl-tRNA synthetase subfamily. In terms of assembly, homodimer. The tRNA molecule binds across the dimer.

It is found in the cytoplasm. The catalysed reaction is tRNA(Ser) + L-serine + ATP = L-seryl-tRNA(Ser) + AMP + diphosphate + H(+). It carries out the reaction tRNA(Sec) + L-serine + ATP = L-seryl-tRNA(Sec) + AMP + diphosphate + H(+). Its pathway is aminoacyl-tRNA biosynthesis; selenocysteinyl-tRNA(Sec) biosynthesis; L-seryl-tRNA(Sec) from L-serine and tRNA(Sec): step 1/1. Functionally, catalyzes the attachment of serine to tRNA(Ser). Is also able to aminoacylate tRNA(Sec) with serine, to form the misacylated tRNA L-seryl-tRNA(Sec), which will be further converted into selenocysteinyl-tRNA(Sec). The sequence is that of Serine--tRNA ligase from Nitrosospira multiformis (strain ATCC 25196 / NCIMB 11849 / C 71).